The sequence spans 456 residues: MRSSWIKPRLGKDNVTQINFARNGYITEEMDFVAKKENLPASLIMEEVARGRLIIPANINHLNLEPMSIGIASRCKVNANIGASPNASDINEEVEKLKLAVKYGADTVMDLSTGGVNLDEVRKAIIHESPVPIGTVPVYQALESVHGSIDRLTEDDFLHIIEKHCQQGVDYQTIHAGLLIEHLPKVKGRITGIVSRGGGILAQWMLHHFKQNPLYTRFDDICEIFKKYDCTFSLGDSLRPGCLHDASDDAQLAELKTLGELTRRAWEHNVQVMVEGPGHVPMDQIEFNVRKQMEECSEAPFYVLGPLVTDISPGYDHISSAIGAAMAGWYGTSMLCYVTPKEHLGLPNAEDVREGLIAYKIAAHAADIARHRAGARDRDDELSHARYNFDWNKQFELSLDPERAKQYHDETLPEEIFKKAEFCSMCGPKHCPMNSKISDESLDQLKDKLEECNSSV.

Substrate is bound by residues Asn-80, Met-109, Tyr-139, His-175, 195–197 (SRG), 236–239 (DSLR), and Glu-275. A Zn(2+)-binding site is contributed by His-279. Tyr-302 is a substrate binding site. A Zn(2+)-binding site is contributed by His-343. Cys-423, Cys-426, and Cys-431 together coordinate [4Fe-4S] cluster.

The protein belongs to the ThiC family. It depends on [4Fe-4S] cluster as a cofactor.

The catalysed reaction is 5-amino-1-(5-phospho-beta-D-ribosyl)imidazole + S-adenosyl-L-methionine = 4-amino-2-methyl-5-(phosphooxymethyl)pyrimidine + CO + 5'-deoxyadenosine + formate + L-methionine + 3 H(+). The protein operates within cofactor biosynthesis; thiamine diphosphate biosynthesis. Functionally, catalyzes the synthesis of the hydroxymethylpyrimidine phosphate (HMP-P) moiety of thiamine from aminoimidazole ribotide (AIR) in a radical S-adenosyl-L-methionine (SAM)-dependent reaction. The chain is Phosphomethylpyrimidine synthase from Prochlorococcus marinus (strain MIT 9312).